The primary structure comprises 57 residues: Large ribosomal subunit protein bL32 (57 aa).

Positions 1 to 19 are enriched in basic residues; that stretch reads MATPKFKKSRANTHSRRSQ. The interval 1-20 is disordered; sequence MATPKFKKSRANTHSRRSQW.

It belongs to the bacterial ribosomal protein bL32 family.

The chain is Large ribosomal subunit protein bL32 from Corynebacterium aurimucosum (strain ATCC 700975 / DSM 44827 / CIP 107346 / CN-1) (Corynebacterium nigricans).